Here is a 207-residue protein sequence, read N- to C-terminus: Holliday junction branch migration complex subunit RuvA (207 aa).

The domain I stretch occupies residues 1–63 (MISSLRGTVL…EDSLQLFGFS (63 aa)). The tract at residues 64–142 (GLEQLQVFEL…ACRRPSAPSA (79 aa)) is domain II. Residues 142 to 146 (ARRPS) form a flexible linker region. A domain III region spans residues 147–207 (APSSVSDSVL…RLGPANQAAR (61 aa)).

Belongs to the RuvA family. Homotetramer. Forms an RuvA(8)-RuvB(12)-Holliday junction (HJ) complex. HJ DNA is sandwiched between 2 RuvA tetramers; dsDNA enters through RuvA and exits via RuvB. An RuvB hexamer assembles on each DNA strand where it exits the tetramer. Each RuvB hexamer is contacted by two RuvA subunits (via domain III) on 2 adjacent RuvB subunits; this complex drives branch migration. In the full resolvosome a probable DNA-RuvA(4)-RuvB(12)-RuvC(2) complex forms which resolves the HJ.

The protein resides in the cytoplasm. The RuvA-RuvB-RuvC complex processes Holliday junction (HJ) DNA during genetic recombination and DNA repair, while the RuvA-RuvB complex plays an important role in the rescue of blocked DNA replication forks via replication fork reversal (RFR). RuvA specifically binds to HJ cruciform DNA, conferring on it an open structure. The RuvB hexamer acts as an ATP-dependent pump, pulling dsDNA into and through the RuvAB complex. HJ branch migration allows RuvC to scan DNA until it finds its consensus sequence, where it cleaves and resolves the cruciform DNA. The protein is Holliday junction branch migration complex subunit RuvA of Leifsonia xyli subsp. xyli (strain CTCB07).